The chain runs to 113 residues: Ribosome-binding factor A (113 aa).

Belongs to the RbfA family. Monomer. Binds 30S ribosomal subunits, but not 50S ribosomal subunits or 70S ribosomes.

Its subcellular location is the cytoplasm. Its function is as follows. One of several proteins that assist in the late maturation steps of the functional core of the 30S ribosomal subunit. Associates with free 30S ribosomal subunits (but not with 30S subunits that are part of 70S ribosomes or polysomes). Required for efficient processing of 16S rRNA. May interact with the 5'-terminal helix region of 16S rRNA. This chain is Ribosome-binding factor A, found in Mycoplasmopsis agalactiae (strain NCTC 10123 / CIP 59.7 / PG2) (Mycoplasma agalactiae).